Consider the following 456-residue polypeptide: Bifunctional protein GlmU (456 aa).

The pyrophosphorylase stretch occupies residues 1 to 229 (MSNSAMSVVI…LSEVEGVNNR (229 aa)). Residues 11–14 (LAAG), Lys-25, Gln-76, 81–82 (GT), 103–105 (YGD), Gly-140, Glu-154, Asn-169, and Asn-227 contribute to the UDP-N-acetyl-alpha-D-glucosamine site. Position 105 (Asp-105) interacts with Mg(2+). Asn-227 contributes to the Mg(2+) binding site. The linker stretch occupies residues 230–250 (LQLARLERVYQAEQAEKLLLA). The interval 251–456 (GVMLRDPARF…QGWQRPVKKK (206 aa)) is N-acetyltransferase. 2 residues coordinate UDP-N-acetyl-alpha-D-glucosamine: Arg-333 and Lys-351. His-363 functions as the Proton acceptor in the catalytic mechanism. 2 residues coordinate UDP-N-acetyl-alpha-D-glucosamine: Tyr-366 and Asn-377. Acetyl-CoA contacts are provided by residues Ala-380, 386–387 (NY), Ser-405, Ala-423, and Arg-440.

This sequence in the N-terminal section; belongs to the N-acetylglucosamine-1-phosphate uridyltransferase family. The protein in the C-terminal section; belongs to the transferase hexapeptide repeat family. Homotrimer. Mg(2+) is required as a cofactor.

Its subcellular location is the cytoplasm. It catalyses the reaction alpha-D-glucosamine 1-phosphate + acetyl-CoA = N-acetyl-alpha-D-glucosamine 1-phosphate + CoA + H(+). The enzyme catalyses N-acetyl-alpha-D-glucosamine 1-phosphate + UTP + H(+) = UDP-N-acetyl-alpha-D-glucosamine + diphosphate. Its pathway is nucleotide-sugar biosynthesis; UDP-N-acetyl-alpha-D-glucosamine biosynthesis; N-acetyl-alpha-D-glucosamine 1-phosphate from alpha-D-glucosamine 6-phosphate (route II): step 2/2. The protein operates within nucleotide-sugar biosynthesis; UDP-N-acetyl-alpha-D-glucosamine biosynthesis; UDP-N-acetyl-alpha-D-glucosamine from N-acetyl-alpha-D-glucosamine 1-phosphate: step 1/1. It functions in the pathway bacterial outer membrane biogenesis; LPS lipid A biosynthesis. In terms of biological role, catalyzes the last two sequential reactions in the de novo biosynthetic pathway for UDP-N-acetylglucosamine (UDP-GlcNAc). The C-terminal domain catalyzes the transfer of acetyl group from acetyl coenzyme A to glucosamine-1-phosphate (GlcN-1-P) to produce N-acetylglucosamine-1-phosphate (GlcNAc-1-P), which is converted into UDP-GlcNAc by the transfer of uridine 5-monophosphate (from uridine 5-triphosphate), a reaction catalyzed by the N-terminal domain. The sequence is that of Bifunctional protein GlmU from Klebsiella pneumoniae subsp. pneumoniae (strain ATCC 700721 / MGH 78578).